The chain runs to 429 residues: Formate-dependent phosphoribosylglycinamide formyltransferase (429 aa).

Residues 26–27 and E86 each bind N(1)-(5-phospho-beta-D-ribosyl)glycinamide; that span reads EL. Residues R118, K159, 199 to 202, and E207 each bind ATP; that span reads EEHI. Residues 123 to 319 enclose the ATP-grasp domain; that stretch reads ETLAREAKVP…EFGLHLRAVL (197 aa). Mg(2+) contacts are provided by E276 and E288. N(1)-(5-phospho-beta-D-ribosyl)glycinamide-binding positions include D295, K375, and 382–383; that span reads RR.

This sequence belongs to the PurK/PurT family. As to quaternary structure, homodimer.

The enzyme catalyses N(1)-(5-phospho-beta-D-ribosyl)glycinamide + formate + ATP = N(2)-formyl-N(1)-(5-phospho-beta-D-ribosyl)glycinamide + ADP + phosphate + H(+). It participates in purine metabolism; IMP biosynthesis via de novo pathway; N(2)-formyl-N(1)-(5-phospho-D-ribosyl)glycinamide from N(1)-(5-phospho-D-ribosyl)glycinamide (formate route): step 1/1. In terms of biological role, involved in the de novo purine biosynthesis. Catalyzes the transfer of formate to 5-phospho-ribosyl-glycinamide (GAR), producing 5-phospho-ribosyl-N-formylglycinamide (FGAR). Formate is provided by PurU via hydrolysis of 10-formyl-tetrahydrofolate. In Thermococcus kodakarensis (strain ATCC BAA-918 / JCM 12380 / KOD1) (Pyrococcus kodakaraensis (strain KOD1)), this protein is Formate-dependent phosphoribosylglycinamide formyltransferase.